The primary structure comprises 685 residues: Threonine--tRNA ligase (685 aa).

The disordered stretch occupies residues 1 to 28; that stretch reads MTSPAPEHSAAPLRVPAGTTAGTAVREA. Residues 1–65 form the TGS domain; sequence MTSPAPEHSA…EVDVDVEPVA (65 aa). Positions 262-568 are catalytic; it reads DHRKLGTELD…LTEHYAGAFP (307 aa). Zn(2+)-binding residues include Cys-367, His-418, and His-545.

It belongs to the class-II aminoacyl-tRNA synthetase family. Homodimer. It depends on Zn(2+) as a cofactor.

Its subcellular location is the cytoplasm. The catalysed reaction is tRNA(Thr) + L-threonine + ATP = L-threonyl-tRNA(Thr) + AMP + diphosphate + H(+). Its function is as follows. Catalyzes the attachment of threonine to tRNA(Thr) in a two-step reaction: L-threonine is first activated by ATP to form Thr-AMP and then transferred to the acceptor end of tRNA(Thr). Also edits incorrectly charged L-seryl-tRNA(Thr). The polypeptide is Threonine--tRNA ligase (Rhodococcus erythropolis (strain PR4 / NBRC 100887)).